The chain runs to 526 residues: 4-alpha-glucanotransferase (526 aa).

This sequence belongs to the disproportionating enzyme family.

It is found in the cytoplasm. It catalyses the reaction Transfers a segment of a (1-&gt;4)-alpha-D-glucan to a new position in an acceptor, which may be glucose or a (1-&gt;4)-alpha-D-glucan.. The polypeptide is 4-alpha-glucanotransferase (malQ) (Chlamydia pneumoniae (Chlamydophila pneumoniae)).